Consider the following 565-residue polypeptide: Periplasmic trehalase (565 aa).

An N-terminal signal peptide occupies residues 1-30 (MKSPTPSRPQKMALIPACIFLCFAALSVQA). Substrate is bound by residues Arg-152, 159-160 (WD), Asn-196, 205-207 (RSQ), 277-279 (RPE), and Gly-310. Residues Asp-312 and Glu-496 each act as proton donor/acceptor in the active site. Residue Glu-511 coordinates substrate. The disordered stretch occupies residues 539-565 (CDNVPATRPLSESTTQPLKQKEAEPTP).

Belongs to the glycosyl hydrolase 37 family. In terms of assembly, monomer.

It localises to the periplasm. It carries out the reaction alpha,alpha-trehalose + H2O = alpha-D-glucose + beta-D-glucose. Functionally, provides the cells with the ability to utilize trehalose at high osmolarity by splitting it into glucose molecules that can subsequently be taken up by the phosphotransferase-mediated uptake system. This Escherichia coli (strain SMS-3-5 / SECEC) protein is Periplasmic trehalase.